We begin with the raw amino-acid sequence, 1460 residues long: DNA-binding protein RFX7 (1460 aa).

A disordered region spans residues 1 to 34 (MAEEQQQPPPQQPDAHQQLPPSAPNSGVALPALV). Positions 108 to 183 (AFSWIRNTLE…YCYSGLRKKA (76 aa)) form a DNA-binding region, RFX-type winged-helix. Residues 188-193 (PTLPNL) carry the PxLPxI/L motif; mediates interaction with ANKRA2 and RFXANK motif. The segment at 308–352 (QRKIQKKQQEQKLQSPLPGESAAKKSESATSNGVTNLPNGNPSIL) is disordered. Phosphoserine is present on serine 322. The segment covering 337–352 (TSNGVTNLPNGNPSIL) has biased composition (polar residues). Serine 379 is subject to Phosphoserine. Residues 404–416 (SVKQAPKTPQNVP) show a composition bias toward polar residues. A disordered region spans residues 404–428 (SVKQAPKTPQNVPASPGGDRSARHR). Phosphoserine is present on residues serine 418 and serine 455. Residues 481-513 (TPSNSNTPLKHSASVSSATGTTEESRSVPQIKN) are compositionally biased toward polar residues. Disordered regions lie at residues 481-585 (TPSN…PSNE), 632-715 (TFTS…AQIP), and 917-1015 (QSVT…SVPP). The segment covering 515–535 (SVVSLQSPGSRSSSAGGTSAV) has biased composition (low complexity). Basic and acidic residues predominate over residues 537-549 (VKVEPETSSDEHP). 2 stretches are compositionally biased toward polar residues: residues 563–583 (QTPSALLGQKSNTDGALQKPS) and 632–644 (TFTSSSSPPNGDS). Threonine 564 carries the post-translational modification Phosphothreonine. Serine 662 carries the phosphoserine modification. Lysine 704 is subject to N6-acetyllysine. Composition is skewed to polar residues over residues 705 to 715 (TEGSTAGAQIP) and 917 to 933 (QSVTPGAPMSSHTSSTH). Pro residues predominate over residues 947–963 (TPTPTPTPTPTPTPTPT). A compositionally biased stretch (polar residues) spans 971–1009 (GSQSLSRESPCSRLAQTTPVDSALGSSRHTPIGTPHSNC). Threonine 988 carries the phosphothreonine modification. Phosphoserine occurs at positions 1178 and 1329.

This sequence belongs to the RFX family. As to quaternary structure, interacts (via PxLPxI/L motif) with RFXANK (via ankyrin repeats). Interacts (via PxLPxI/L motif) with ANKRA2 (via ankyrin repeats). As to expression, widely expressed in many different tissue types including thymus and placenta, with high expression in brain. Expressed in both inhibitory and excitatory neurons in cortex.

It localises to the nucleus. In terms of biological role, transcription factor. Acts as a transcriptional activator by binding to promoter regions of target genes, such as PDCD4, PIK3IP1, MXD4, PNRC1, and RFX5. Plays a role in natural killer (NK) cell maintenance and immunity. May play a role in the process of ciliogenesis in the neural tube and neural tube closure. This chain is DNA-binding protein RFX7, found in Homo sapiens (Human).